A 109-amino-acid chain; its full sequence is Large ribosomal subunit protein uL24 (109 aa).

This sequence belongs to the universal ribosomal protein uL24 family. As to quaternary structure, part of the 50S ribosomal subunit.

Its function is as follows. One of two assembly initiator proteins, it binds directly to the 5'-end of the 23S rRNA, where it nucleates assembly of the 50S subunit. In terms of biological role, one of the proteins that surrounds the polypeptide exit tunnel on the outside of the subunit. This Rickettsia massiliae (strain Mtu5) protein is Large ribosomal subunit protein uL24.